Here is a 127-residue protein sequence, read N- to C-terminus: uncharacterized protein (127 aa).

3 helical membrane-spanning segments follow: residues 20–42, 54–76, and 91–110; these read NMIW…FMSS, IYFC…IFVY, and WILI…ASFT.

It is found in the membrane. The protein localises to the cytoplasm. This is an uncharacterized protein from Schizosaccharomyces pombe (strain 972 / ATCC 24843) (Fission yeast).